The following is a 495-amino-acid chain: uncharacterized protein (495 aa).

Residues serine 16, glutamate 36, tryptophan 45, aspartate 56, tyrosine 62, and valine 105 each coordinate FAD.

It belongs to the FAD-binding monooxygenase family. Requires FAD as cofactor.

This is an uncharacterized protein from Mycobacterium tuberculosis (strain CDC 1551 / Oshkosh).